The following is a 179-amino-acid chain: Protein LDB18 (179 aa).

May be involved in protein-linked oligosaccharide phosphorylation since the deletion reduces the negative charge of the cell surface. This is Protein LDB18 (LDB18) from Saccharomyces cerevisiae (strain ATCC 204508 / S288c) (Baker's yeast).